A 180-amino-acid polypeptide reads, in one-letter code: Iron sulfur cluster assembly protein 1, mitochondrial (180 aa).

It belongs to the NifU family. In terms of assembly, component of the core Fe-S cluster (ISC) assembly machinery. It depends on [2Fe-2S] cluster as a cofactor.

It localises to the mitochondrion matrix. It participates in cofactor biosynthesis; iron-sulfur cluster biosynthesis. Scaffold protein for the de novo synthesis of iron-sulfur (Fe-S) clusters within mitochondria, which is required for maturation of both mitochondrial and cytoplasmic [2Fe-2S] and [4Fe-4S] proteins. First, a [2Fe-2S] cluster is transiently assembled on the scaffold protein ISU1. In a second step, the cluster is released from ISU1, transferred to a glutaredoxin, followed by the formation of mitochondrial [2Fe-2S] proteins, the synthesis of [4Fe-4S] clusters and their target-specific insertion into the recipient apoproteins. Cluster assembly on ISU1 depends on the function of the cysteine desulfurase complex NFS1-ISD11, which serves as the sulfur donor for cluster synthesis, the iron-binding protein frataxin as the putative iron donor, and the electron transfer chain comprised of ferredoxin reductase and ferredoxin, which receive their electrons from NADH. The chain is Iron sulfur cluster assembly protein 1, mitochondrial (ISU1) from Kluyveromyces lactis (strain ATCC 8585 / CBS 2359 / DSM 70799 / NBRC 1267 / NRRL Y-1140 / WM37) (Yeast).